The primary structure comprises 310 residues: Aspartate carbamoyltransferase catalytic subunit (310 aa).

Carbamoyl phosphate contacts are provided by arginine 57 and threonine 58. Lysine 86 contacts L-aspartate. Carbamoyl phosphate contacts are provided by arginine 107, histidine 135, and glutamine 138. L-aspartate contacts are provided by arginine 168 and arginine 229. Carbamoyl phosphate is bound by residues leucine 268 and proline 269.

Belongs to the aspartate/ornithine carbamoyltransferase superfamily. ATCase family. As to quaternary structure, heterooligomer of catalytic and regulatory chains.

It carries out the reaction carbamoyl phosphate + L-aspartate = N-carbamoyl-L-aspartate + phosphate + H(+). It participates in pyrimidine metabolism; UMP biosynthesis via de novo pathway; (S)-dihydroorotate from bicarbonate: step 2/3. Functionally, catalyzes the condensation of carbamoyl phosphate and aspartate to form carbamoyl aspartate and inorganic phosphate, the committed step in the de novo pyrimidine nucleotide biosynthesis pathway. The sequence is that of Aspartate carbamoyltransferase catalytic subunit from Thermococcus kodakarensis (strain ATCC BAA-918 / JCM 12380 / KOD1) (Pyrococcus kodakaraensis (strain KOD1)).